Reading from the N-terminus, the 85-residue chain is Small ribosomal subunit protein bS20 (85 aa).

Belongs to the bacterial ribosomal protein bS20 family.

Functionally, binds directly to 16S ribosomal RNA. The chain is Small ribosomal subunit protein bS20 from Borreliella afzelii (strain PKo) (Borrelia afzelii).